A 370-amino-acid polypeptide reads, in one-letter code: Anthranilate phosphoribosyltransferase (370 aa).

5-phospho-alpha-D-ribose 1-diphosphate-binding positions include Gly82, 85–86, Thr90, 92–95, 110–118, and Ser122; these read GD, NVST, and KHGNRAATS. Gly82 contacts anthranilate. A Mg(2+)-binding site is contributed by Ser94. An anthranilate-binding site is contributed by Asn113. Arg168 contacts anthranilate. Asp226 and Glu227 together coordinate Mg(2+).

The protein belongs to the anthranilate phosphoribosyltransferase family. Homodimer. It depends on Mg(2+) as a cofactor.

The enzyme catalyses N-(5-phospho-beta-D-ribosyl)anthranilate + diphosphate = 5-phospho-alpha-D-ribose 1-diphosphate + anthranilate. The protein operates within amino-acid biosynthesis; L-tryptophan biosynthesis; L-tryptophan from chorismate: step 2/5. Functionally, catalyzes the transfer of the phosphoribosyl group of 5-phosphorylribose-1-pyrophosphate (PRPP) to anthranilate to yield N-(5'-phosphoribosyl)-anthranilate (PRA). This chain is Anthranilate phosphoribosyltransferase, found in Methanosarcina acetivorans (strain ATCC 35395 / DSM 2834 / JCM 12185 / C2A).